A 146-amino-acid chain; its full sequence is MDIHEILKYLPHRYPLLLVDRVLAFEPGKSLTALKNVTINEPFFTGHFPHHPVMPGVLVIEALAQAAALLTLKTSNVEADENSIYYFVGIDNARFKRPVEPGDQLILKATVLKERIGIWKYAARAEVDGRVAAEAELMCTVRPKET.

The active site involves His-47.

It belongs to the thioester dehydratase family. FabZ subfamily.

Its subcellular location is the cytoplasm. It catalyses the reaction a (3R)-hydroxyacyl-[ACP] = a (2E)-enoyl-[ACP] + H2O. Involved in unsaturated fatty acids biosynthesis. Catalyzes the dehydration of short chain beta-hydroxyacyl-ACPs and long chain saturated and unsaturated beta-hydroxyacyl-ACPs. This Nitrosospira multiformis (strain ATCC 25196 / NCIMB 11849 / C 71) protein is 3-hydroxyacyl-[acyl-carrier-protein] dehydratase FabZ.